Here is a 1205-residue protein sequence, read N- to C-terminus: Solute carrier family 12 member 2 (1205 aa).

M1 carries the N-acetylmethionine modification. Residues 1–22 (MEPGPARPRLAPAARPGWGRAA) are compositionally biased toward low complexity. The interval 1–102 (MEPGPARPRL…AAAAAAAAAA (102 aa)) is disordered. Residues 1–279 (MEPGPARPRL…AESKGVVKFG (279 aa)) are Cytoplasmic-facing. The span at 23–35 (GCRRRGGPARHGR) shows a compositional bias: basic residues. S74 and S76 each carry phosphoserine. Positions 77 to 80 (RFQV) match the RFXV motif 1 motif. Residues 87-102 (AGRAAAAAAAAAAAAA) show a composition bias toward low complexity. The RFXV motif 2 motif lies at 133–136 (RFRV). Low complexity predominate over residues 143 to 155 (ASSSADDSLSDAA). A disordered region spans residues 143–187 (ASSSADDSLSDAAGVGGDGPNVSFQNGGDTVLSEGSSLHSGGGSG). T196, T200, T205, T210, and T223 each carry phosphothreonine. Residue S235 is modified to Phosphoserine. Position 259 is a phosphothreonine (T259). Residues 280 to 309 (WIKGVLVRCMLNIWGVMLFIRLSWIVGQAG) form a discontinuously helical membrane-spanning segment. Residue L290 coordinates Na(+). Positions 291 and 292 each coordinate K(+). W293 contributes to the Na(+) binding site. Residues G294, V295, and M296 each coordinate chloride. The helical transmembrane segment at 310–329 (IGLSVVVIAMATVVTTITGL) threads the bilayer. The Cytoplasmic segment spans residues 330-360 (STSAIATNGFVRGGGAYYLISRSLGPEFGGA). Residues 361–388 (IGLIFAFANAVAVAMYVVGFAETVVELL) traverse the membrane as a helical segment. F365 serves as a coordination point for chloride. Y376 contributes to the K(+) binding site. Topologically, residues 389–398 (KEHSILMIDE) are extracellular. The chain crosses the membrane as a helical span at residues 399–422 (INDIRIIGAITVVILLGISVAGME). The Cytoplasmic segment spans residues 423–425 (WEA). A helical membrane pass occupies residues 426-447 (KAQIVLLVILLLAIADFVIGTF). The Extracellular portion of the chain corresponds to 448–479 (ISLESKKPKGFFGYKSEIFNENFGPDFREEET). The chain crosses the membrane as a discontinuously helical span at residues 480–497 (FFSVFAIFFPAATGILAG). K(+)-binding residues include P489, A490, and T492. Residues P489 and A490 each coordinate chloride. Residues G493 and I494 each coordinate chloride. At 498 to 512 (ANISGDLADPQSAIP) the chain is on the cytoplasmic side. The helical transmembrane segment at 513–534 (KGTLLAILITTVVYIGIAVSVG) threads the bilayer. The Extracellular segment spans residues 535–591 (SCVVRDATGNVNDTITTELTNCTSAACKLNFDFSYCESNTCSYGLMNNFQVMSMVSG). Residues N546 and N555 are each glycosylated (N-linked (GlcNAc...) asparagine). 2 disulfide bridges follow: C556–C561 and C570–C575. A helical membrane pass occupies residues 592–616 (FAPLISAGIFSATLSSALASLVSAP). Na(+) is bound by residues A603, S606, and S607. The Cytoplasmic portion of the chain corresponds to 617–644 (KIFQALCKDNIYPAFQMFAKGYGKNNEP). 2 helical membrane-spanning segments follow: residues 645–665 (LRGY…AELN) and 666–684 (VIAP…LINF). Chloride is bound by residues F675 and Y679. At 685-707 (SVFHASLAKSPGWRPAFKYYNMW) the chain is on the cytoplasmic side. A run of 2 helical transmembrane segments spans residues 708-725 (ISLI…VINW) and 726-738 (WAAL…VLGL). The Cytoplasmic segment spans residues 739-1205 (YIYVTYKKPD…NHQSVLTFYS (467 aa)). The interval 754–771 (STQALTYLSALQHSIRLS) is scissor helix. Phosphoserine is present on residues S933 and S937. Residues 953–986 (SDQDTCKSSGEKSITQKDEEEDGKTPTQPLLKKE) are disordered. S987 carries the phosphoserine modification.

Belongs to the SLC12A transporter family. Homodimer; adopts a domain-swap conformation at the scissor helices connecting the transmembrane domain and C-terminal domain. Phosphorylated at Thr-196, Thr-200 and Thr-205 by OXSR1/OSR1 and STK39/SPAK downstream of WNK kinases (WNK1, WNK2, WNK3 or WNK4), promoting its activity. In terms of tissue distribution, widely expressed. High expression found in the cochlea, cochlear lateral wall, and the choroid plexus. Lower expression found in the cerebellum and the cortex.

It localises to the basolateral cell membrane. The enzyme catalyses K(+)(out) + 2 chloride(out) + Na(+)(out) = K(+)(in) + 2 chloride(in) + Na(+)(in). Its activity is regulated as follows. Activated following phosphorylation by OXSR1/OSR1 and STK39/SPAK downstream of WNK kinases (WNK1, WNK2, WNK3 or WNK4). Inhibited by bumetanide and furosemide. In terms of biological role, cation-chloride cotransporter which mediates the electroneutral transport of chloride, potassium and/or sodium ions across the membrane. Plays a vital role in the regulation of ionic balance and cell volume. In Mus musculus (Mouse), this protein is Solute carrier family 12 member 2 (Slc12a2).